Reading from the N-terminus, the 1067-residue chain is Sal-like protein 4 (1067 aa).

The segment at 1 to 62 (MSRRKQAKPQ…SEDSIPVKRP (62 aa)) is disordered. A compositionally biased stretch (low complexity) spans 15–42 (EEGQGEQPQQLPSPDLAEALAAEEPGAP). Position 53 is a phosphoserine (S53). Residues 68-90 (HICNKCCAEFFSLSEFMEHKKSC) form a C2H2-type 1; atypical zinc finger. The segment at 115–140 (ALSHQLGSPSNKDSLQENGSSSGDLK) is disordered. Polar residues predominate over residues 119–137 (QLGSPSNKDSLQENGSSSG). K151 participates in a covalent cross-link: Glycyl lysine isopeptide (Lys-Gly) (interchain with G-Cter in SUMO1); alternate. Residue K151 forms a Glycyl lysine isopeptide (Lys-Gly) (interchain with G-Cter in SUMO2); alternate linkage. Residues K170, K185, and K291 each participate in a glycyl lysine isopeptide (Lys-Gly) (interchain with G-Cter in SUMO2) cross-link. S308 carries the post-translational modification Phosphoserine. A Glycyl lysine isopeptide (Lys-Gly) (interchain with G-Cter in SUMO1); alternate cross-link involves residue K317. K317 participates in a covalent cross-link: Glycyl lysine isopeptide (Lys-Gly) (interchain with G-Cter in SUMO2); alternate. K377 participates in a covalent cross-link: Glycyl lysine isopeptide (Lys-Gly) (interchain with G-Cter in SUMO2). K379 is covalently cross-linked (Glycyl lysine isopeptide (Lys-Gly) (interchain with G-Cter in SUMO1); alternate). K379 is covalently cross-linked (Glycyl lysine isopeptide (Lys-Gly) (interchain with G-Cter in SUMO2); alternate). 2 C2H2-type zinc fingers span residues 387–409 (HKCR…LRSH) and 415–437 (YVCP…LQRH). A Glycyl lysine isopeptide (Lys-Gly) (interchain with G-Cter in SUMO2) cross-link involves residue K441. The disordered stretch occupies residues 471–521 (DESSLSVDAEPVPVTGTPSLGLPQKLTSGPNSRDLMGGSLPNDMQPGPSPE). A Glycyl lysine isopeptide (Lys-Gly) (interchain with G-Cter in SUMO2) cross-link involves residue K557. C2H2-type zinc fingers lie at residues 573-595 (NECL…YRTH) and 601-623 (FQCK…LGVH). Glycyl lysine isopeptide (Lys-Gly) (interchain with G-Cter in SUMO2) cross-links involve residues K604 and K630. The C2H2-type 6 zinc-finger motif lies at 633–655 (HSCPICQKKFTNAVMLQQHIRMH). Disordered regions lie at residues 682 to 716 (ENGS…STVS) and 752 to 835 (RQSS…SLPP). The span at 693 to 704 (DAAEGMEAEEVC) shows a compositional bias: acidic residues. 2 stretches are compositionally biased toward polar residues: residues 707–716 (DVPSGPSTVS) and 752–761 (RQSSRENSSL). Residues S785 and S798 each carry the phosphoserine modification. A compositionally biased stretch (polar residues) spans 798–809 (SPANSQAGSVKS). Basic and acidic residues predominate over residues 810–829 (RSPEGHKAEGVESCRVDTEG). K846 participates in a covalent cross-link: Glycyl lysine isopeptide (Lys-Gly) (interchain with G-Cter in SUMO1); alternate. A Glycyl lysine isopeptide (Lys-Gly) (interchain with G-Cter in SUMO2); alternate cross-link involves residue K846. Residues 880 to 902 (HCCTRCGKNFSSASALQIHERTH) form a C2H2-type 7 zinc finger. Residue K906 forms a Glycyl lysine isopeptide (Lys-Gly) (interchain with G-Cter in SUMO2) linkage. The C2H2-type 8 zinc finger occupies 908–930 (FVCNICGRAFTTKGNLKVHYMTH). Glycyl lysine isopeptide (Lys-Gly) (interchain with G-Cter in SUMO2) cross-links involve residues K942 and K957. Residue S1029 is modified to Phosphoserine.

It belongs to the sal C2H2-type zinc-finger protein family. Interacts with POU5F1/OCT4. Interacts with NANOG. Interacts with BEND3. Interacts with NSD2 (via PHD-type zinc fingers 1, 2 and 3). Interacts with NRBP1. Post-translationally, sumoylation with both SUMO1 and SUMO2 regulates the stability, subcellular localization, transcriptional activity, and may reduce interaction with POU5F1/OCT4.

The protein localises to the cytoplasm. It is found in the nucleus. Transcription factor with a key role in the maintenance and self-renewal of embryonic and hematopoietic stem cells. The polypeptide is Sal-like protein 4 (Sall4) (Mus musculus (Mouse)).